The following is a 63-amino-acid chain: uncharacterized protein (63 aa).

This is an uncharacterized protein from Thermoproteus tenax (TTV1).